Reading from the N-terminus, the 295-residue chain is 33 kDa chaperonin (295 aa).

Disulfide bonds link Cys238-Cys240 and Cys271-Cys274.

The protein belongs to the HSP33 family. In terms of processing, under oxidizing conditions two disulfide bonds are formed involving the reactive cysteines. Under reducing conditions zinc is bound to the reactive cysteines and the protein is inactive.

Its subcellular location is the cytoplasm. Functionally, redox regulated molecular chaperone. Protects both thermally unfolding and oxidatively damaged proteins from irreversible aggregation. Plays an important role in the bacterial defense system toward oxidative stress. In Clostridium botulinum (strain Eklund 17B / Type B), this protein is 33 kDa chaperonin.